Reading from the N-terminus, the 764-residue chain is Kinesin-like protein KIN-14N (764 aa).

The tract at residues 1–50 is disordered; sequence MSTRATRPGMLHQKENAADAQAGKRQRTAAGSAARAPLSANAAPPAPDPA. The segment covering 29-50 has biased composition (low complexity); it reads AAGSAARAPLSANAAPPAPDPA. The stretch at 105 to 416 forms a coiled coil; sequence AEIGKLNGLL…RLHNTILELK (312 aa). The Kinesin motor domain occupies 418-747; sequence NIRVFCRVRP…LRFAARVNSC (330 aa). Residue 498–505 coordinates ATP; it reads GQTGSGKT.

This sequence belongs to the TRAFAC class myosin-kinesin ATPase superfamily. Kinesin family. KIN-14 subfamily.

In Oryza sativa subsp. japonica (Rice), this protein is Kinesin-like protein KIN-14N.